The chain runs to 279 residues: Protease HtpX homolog (279 aa).

Helical transmembrane passes span 4 to 24 (IFLF…VLAV) and 34 to 54 (GSLL…SLLM). Zn(2+) is bound at residue H140. E141 is an active-site residue. Residue H144 participates in Zn(2+) binding. The next 2 helical transmembrane spans lie at 155-175 (LIQG…ANLI) and 189-209 (FLVS…IVMW). E215 serves as a coordination point for Zn(2+).

It belongs to the peptidase M48B family. Zn(2+) is required as a cofactor.

It localises to the cell inner membrane. The sequence is that of Protease HtpX homolog from Neisseria meningitidis serogroup B (strain ATCC BAA-335 / MC58).